The chain runs to 118 residues: HTH-type transcriptional regulator SarT (118 aa).

The H-T-H motif DNA-binding region spans 55 to 78 (MRDIISYIGIDQSRIVKSVKELSK).

Belongs to the SarA family.

The protein resides in the cytoplasm. Its function is as follows. Transcriptional regulator acting as an intermediary between major regulators SarA and agr and virulence genes. Represses alpha-hemolysin (hla) gene expression. The protein is HTH-type transcriptional regulator SarT (sarT) of Staphylococcus aureus (strain Mu50 / ATCC 700699).